We begin with the raw amino-acid sequence, 316 residues long: tRNA dimethylallyltransferase (316 aa).

17-24 is an ATP binding site; the sequence is GPTASGKT. Position 19 to 24 (19 to 24) interacts with substrate; the sequence is TASGKT. 3 interaction with substrate tRNA regions span residues 42-45, 166-170, and 247-252; these read DSAL, QRLSR, and RCVGYR.

This sequence belongs to the IPP transferase family. In terms of assembly, monomer. Mg(2+) serves as cofactor.

It catalyses the reaction adenosine(37) in tRNA + dimethylallyl diphosphate = N(6)-dimethylallyladenosine(37) in tRNA + diphosphate. In terms of biological role, catalyzes the transfer of a dimethylallyl group onto the adenine at position 37 in tRNAs that read codons beginning with uridine, leading to the formation of N6-(dimethylallyl)adenosine (i(6)A). The protein is tRNA dimethylallyltransferase of Klebsiella pneumoniae (strain 342).